A 170-amino-acid chain; its full sequence is Transcriptional repressor NrdR (170 aa).

A zinc finger spans residues 3 to 34; it reads CPFCRHPDSRVVDSRTTDDGTSIRRRRQCPDC. The region spanning 46-136 is the ATP-cone domain; sequence LMVVKRSGVT…VYRAFDSLED (91 aa). The interval 148–170 is disordered; the sequence is RPSAEDRGSGETLEVPAPAIAAD.

It belongs to the NrdR family. Zn(2+) is required as a cofactor.

Negatively regulates transcription of bacterial ribonucleotide reductase nrd genes and operons by binding to NrdR-boxes. This is Transcriptional repressor NrdR from Streptomyces griseus subsp. griseus (strain JCM 4626 / CBS 651.72 / NBRC 13350 / KCC S-0626 / ISP 5235).